A 107-amino-acid chain; its full sequence is Protein Rev (107 aa).

A phosphoserine; by host CK2 mark is found at serine 5 and serine 8. Residues 18-26 (IIKILYQSN) form a homomultimerization region. 2 disordered regions span residues 26 to 48 (NPYP…WRAR) and 81 to 107 (LNLD…VGNP). A Nuclear localization signal and RNA-binding (RRE) motif is present at residues 34–50 (TRQARRNRRRRWRARQR). Over residues 36-48 (QARRNRRRRWRAR) the composition is skewed to basic residues. The short motif at 73–84 (LQLPPLERLNLD) is the Nuclear export signal and binding to XPO1 element. Over residues 89-101 (SGTSGTQQSQGTT) the composition is skewed to low complexity. The residue at position 92 (serine 92) is a Phosphoserine; by host.

The protein belongs to the HIV-1 REV protein family. Homomultimer; when bound to the RRE. Multimeric assembly is essential for activity and may involve XPO1. Binds to human KPNB1, XPO1, TNPO1, RANBP5 and IPO7. Interacts with the viral Integrase. Interacts with human KHDRBS1. Interacts with human NAP1; this interaction decreases Rev multimerization and stimulates its activity. Interacts with human DEAD-box helicases DDX3 and DDX24; these interactions may serve for viral RNA export to the cytoplasm and packaging, respectively. Interacts with human PSIP1; this interaction may inhibit HIV-1 DNA integration by promoting dissociation of the Integrase-LEDGF/p75 complex. In terms of processing, asymmetrically arginine dimethylated at one site by host PRMT6. Methylation impairs the RNA-binding activity and export of viral RNA from the nucleus to the cytoplasm. Phosphorylated by protein kinase CK2. Presence of, and maybe binding to the N-terminus of the regulatory beta subunit of CK2 is necessary for CK2-mediated Rev's phosphorylation.

It localises to the host nucleus. The protein localises to the host nucleolus. Its subcellular location is the host cytoplasm. Functionally, escorts unspliced or incompletely spliced viral pre-mRNAs (late transcripts) out of the nucleus of infected cells. These pre-mRNAs carry a recognition sequence called Rev responsive element (RRE) located in the env gene, that is not present in fully spliced viral mRNAs (early transcripts). This function is essential since most viral proteins are translated from unspliced or partially spliced pre-mRNAs which cannot exit the nucleus by the pathway used by fully processed cellular mRNAs. Rev itself is translated from a fully spliced mRNA that readily exits the nucleus. Rev's nuclear localization signal (NLS) binds directly to KPNB1/Importin beta-1 without previous binding to KPNA1/Importin alpha-1. KPNB1 binds to the GDP bound form of RAN (Ran-GDP) and targets Rev to the nucleus. In the nucleus, the conversion from Ran-GDP to Ran-GTP dissociates Rev from KPNB1 and allows Rev's binding to the RRE in viral pre-mRNAs. Rev multimerization on the RRE via cooperative assembly exposes its nuclear export signal (NES) to the surface. Rev can then form a complex with XPO1/CRM1 and Ran-GTP, leading to nuclear export of the complex. Conversion from Ran-GTP to Ran-GDP mediates dissociation of the Rev/RRE/XPO1/RAN complex, so that Rev can return to the nucleus for a subsequent round of export. Beside KPNB1, also seems to interact with TNPO1/Transportin-1, RANBP5/IPO5 and IPO7/RANBP7 for nuclear import. The nucleoporin-like HRB/RIP is an essential cofactor that probably indirectly interacts with Rev to release HIV RNAs from the perinuclear region to the cytoplasm. The chain is Protein Rev from Homo sapiens (Human).